We begin with the raw amino-acid sequence, 427 residues long: Actin-related protein 3 (427 aa).

Belongs to the actin family. ARP3 subfamily. As to quaternary structure, component of the Arp2/3 complex composed of arp2, act2, arc1/p41-ARC, arc2/p34-ARC, arc3/p21-ARC, arc4/p20-ARC and arc5/p16-ARC.

It localises to the cytoplasm. The protein localises to the cytoskeleton. Its subcellular location is the actin patch. Functions as ATP-binding component of the Arp2/3 complex which is involved in regulation of actin polymerization and together with an activating nucleation-promoting factor (NPF) mediates the formation of branched actin networks. Seems to contact the pointed end of the daughter actin filament. May be involved in cytokinesis. The polypeptide is Actin-related protein 3 (act2) (Schizosaccharomyces pombe (strain 972 / ATCC 24843) (Fission yeast)).